The chain runs to 420 residues: Tyrosine--tRNA ligase (420 aa).

Tyr-36 contributes to the L-tyrosine binding site. The short motif at 41–50 (PTADSLHIGH) is the 'HIGH' region element. L-tyrosine-binding residues include Tyr-170 and Gln-174. Residues 231–235 (KFGKS) carry the 'KMSKS' region motif. An ATP-binding site is contributed by Lys-234. The 68-residue stretch at 353–420 (TNIVEVLIET…KKKYFMVNYQ (68 aa)) folds into the S4 RNA-binding domain.

It belongs to the class-I aminoacyl-tRNA synthetase family. TyrS type 1 subfamily. In terms of assembly, homodimer.

It is found in the cytoplasm. It catalyses the reaction tRNA(Tyr) + L-tyrosine + ATP = L-tyrosyl-tRNA(Tyr) + AMP + diphosphate + H(+). Catalyzes the attachment of tyrosine to tRNA(Tyr) in a two-step reaction: tyrosine is first activated by ATP to form Tyr-AMP and then transferred to the acceptor end of tRNA(Tyr). The protein is Tyrosine--tRNA ligase of Staphylococcus aureus (strain bovine RF122 / ET3-1).